A 337-amino-acid polypeptide reads, in one-letter code: Phosphate acyltransferase (337 aa).

This sequence belongs to the PlsX family. Homodimer. Probably interacts with PlsY.

The protein localises to the cytoplasm. It carries out the reaction a fatty acyl-[ACP] + phosphate = an acyl phosphate + holo-[ACP]. It participates in lipid metabolism; phospholipid metabolism. Functionally, catalyzes the reversible formation of acyl-phosphate (acyl-PO(4)) from acyl-[acyl-carrier-protein] (acyl-ACP). This enzyme utilizes acyl-ACP as fatty acyl donor, but not acyl-CoA. The chain is Phosphate acyltransferase from Aquifex aeolicus (strain VF5).